The chain runs to 285 residues: BAG family molecular chaperone regulator 2 (285 aa).

Residues Arg-37 to Gln-113 form the Ubiquitin-like domain. The BAG domain maps to Ala-132 to Lys-210. A Phosphoserine modification is found at Ser-244.

As to quaternary structure, binds to the ATPase domain of HSP70/HSC70 chaperones.

Its function is as follows. Co-chaperone that regulates diverse cellular pathways, such as programmed cell death and stress responses. The protein is BAG family molecular chaperone regulator 2 (BAG2) of Arabidopsis thaliana (Mouse-ear cress).